Here is a 220-residue protein sequence, read N- to C-terminus: Ribosomal RNA small subunit methyltransferase G (220 aa).

S-adenosyl-L-methionine contacts are provided by residues Gly-78, Phe-83, 129–130 (GE), and Arg-146.

This sequence belongs to the methyltransferase superfamily. RNA methyltransferase RsmG family.

Its subcellular location is the cytoplasm. The enzyme catalyses guanosine(527) in 16S rRNA + S-adenosyl-L-methionine = N(7)-methylguanosine(527) in 16S rRNA + S-adenosyl-L-homocysteine. Its function is as follows. Specifically methylates the N7 position of guanine in position 527 of 16S rRNA. The protein is Ribosomal RNA small subunit methyltransferase G of Geobacter metallireducens (strain ATCC 53774 / DSM 7210 / GS-15).